A 230-amino-acid polypeptide reads, in one-letter code: Small ribosomal subunit protein uS3 (230 aa).

A KH type-2 domain is found at 39–107 (VRKFLEKKLE…PAQINIAEIR (69 aa)).

The protein belongs to the universal ribosomal protein uS3 family. In terms of assembly, part of the 30S ribosomal subunit. Forms a tight complex with proteins S10 and S14.

Its function is as follows. Binds the lower part of the 30S subunit head. Binds mRNA in the 70S ribosome, positioning it for translation. The chain is Small ribosomal subunit protein uS3 from Shewanella amazonensis (strain ATCC BAA-1098 / SB2B).